A 594-amino-acid chain; its full sequence is ATP-dependent lipid A-core flippase (594 aa).

Transmembrane regions (helical) follow at residues 35-55, 64-84, 135-155, 161-181, 262-282, and 289-309; these read FVLAIIAMGLVAASEGIIPKV, FGGSYAGKLWHVPALLVGVAL, AVIFEVNQVMQILTGVLITLV, VVALLIYLFYTNWKLTLVVAV, VTAFLASLALSVILTIAMIQA, and IGGFTGFVMAMLLLISPLKHL. The ABC transmembrane type-1 domain occupies 36–318; it reads VLAIIAMGLV…LADLNQPLQR (283 aa). One can recognise an ABC transporter domain in the interval 350 to 588; that stretch reads LVFDNVGFRY…NGLYAGLHRI (239 aa). Residue 384 to 391 participates in ATP binding; the sequence is GPSGSGKT.

Belongs to the ABC transporter superfamily. Lipid exporter (TC 3.A.1.106) family. As to quaternary structure, homodimer.

It localises to the cell inner membrane. It catalyses the reaction ATP + H2O + lipid A-core oligosaccharideSide 1 = ADP + phosphate + lipid A-core oligosaccharideSide 2.. In terms of biological role, involved in lipopolysaccharide (LPS) biosynthesis. Translocates lipid A-core from the inner to the outer leaflet of the inner membrane. Transmembrane domains (TMD) form a pore in the inner membrane and the ATP-binding domain (NBD) is responsible for energy generation. The sequence is that of ATP-dependent lipid A-core flippase from Cupriavidus metallidurans (strain ATCC 43123 / DSM 2839 / NBRC 102507 / CH34) (Ralstonia metallidurans).